The sequence spans 451 residues: Adenylyltransferase and sulfurtransferase MOCS3-2 (451 aa).

Positions 42 to 62 are disordered; that stretch reads GEDSDEAEESSNDMPTPQTKL. Positions 43 to 52 are enriched in acidic residues; the sequence is EDSDEAEESS. T60 is subject to Phosphothreonine. Residues G99, D120, 127–131, K144, and 188–189 contribute to the ATP site; these read SNLHR and DN. Positions 229 and 232 each coordinate Zn(2+). The active-site Glycyl thioester intermediate; for adenylyltransferase activity is C246. C304 and C307 together coordinate Zn(2+). Residues 353–449 form the Rhodanese domain; the sequence is QSQPHLLLDV…WTGSVDATFP (97 aa). C408 functions as the Cysteine persulfide intermediate; for sulfurtransferase activity in the catalytic mechanism.

In the N-terminal section; belongs to the HesA/MoeB/ThiF family. UBA4 subfamily. Zn(2+) is required as a cofactor.

It is found in the cytoplasm. It catalyses the reaction [molybdopterin-synthase sulfur-carrier protein]-C-terminal Gly-Gly + ATP + H(+) = [molybdopterin-synthase sulfur-carrier protein]-C-terminal Gly-Gly-AMP + diphosphate. The catalysed reaction is [molybdopterin-synthase sulfur-carrier protein]-C-terminal Gly-Gly-AMP + S-sulfanyl-L-cysteinyl-[cysteine desulfurase] + AH2 = [molybdopterin-synthase sulfur-carrier protein]-C-terminal-Gly-aminoethanethioate + L-cysteinyl-[cysteine desulfurase] + A + AMP + 2 H(+). It participates in tRNA modification; 5-methoxycarbonylmethyl-2-thiouridine-tRNA biosynthesis. Its pathway is cofactor biosynthesis; molybdopterin biosynthesis. In terms of biological role, plays a central role in 2-thiolation of mcm(5)S(2)U at tRNA wobble positions of cytosolic tRNA(Lys), tRNA(Glu) and tRNA(Gln). Also essential during biosynthesis of the molybdenum cofactor. Acts by mediating the C-terminal thiocarboxylation of sulfur carriers URM1 and MOCS2A. Its N-terminus first activates URM1 and MOCS2A as acyl-adenylates (-COAMP), then the persulfide sulfur on the catalytic cysteine is transferred to URM1 and MOCS2A to form thiocarboxylation (-COSH) of their C-terminus. The reaction probably involves hydrogen sulfide that is generated from the persulfide intermediate and that acts as a nucleophile towards URM1 and MOCS2A. Subsequently, a transient disulfide bond is formed. Does not use thiosulfate as sulfur donor; NFS1 probably acting as a sulfur donor for thiocarboxylation reactions. The chain is Adenylyltransferase and sulfurtransferase MOCS3-2 from Drosophila pseudoobscura pseudoobscura (Fruit fly).